We begin with the raw amino-acid sequence, 194 residues long: Molybdenum cofactor guanylyltransferase (194 aa).

Residues 12-14 (LAG), lysine 25, asparagine 53, aspartate 71, and aspartate 101 each bind GTP. Position 101 (aspartate 101) interacts with Mg(2+).

The protein belongs to the MobA family. As to quaternary structure, monomer. An equilibrium exists between a monomeric and oligomeric form of the enzyme, which could be an octamer; whether this oligomeric arrangement is of functional relevance is unclear. Interacts with MoeA and MobB in vivo. Mg(2+) is required as a cofactor. It depends on Mn(2+) as a cofactor.

It localises to the cytoplasm. It catalyses the reaction Mo-molybdopterin + GTP + H(+) = Mo-molybdopterin guanine dinucleotide + diphosphate. Transfers a GMP moiety from GTP to Mo-molybdopterin (Mo-MPT) cofactor (Moco or molybdenum cofactor) to form Mo-molybdopterin guanine dinucleotide (Mo-MGD) cofactor. Is also involved in the biosynthesis of the bis-MGD form of the Moco cofactor (Mo-bisMGD) in which the metal is symmetrically ligated by the dithiolene groups of two MGD molecules. Is necessary and sufficient for the in vitro activation of the DMSOR molybdoenzyme that uses the Mo-bisMGD form of molybdenum cofactor, which implies formation and efficient insertion of the cofactor into the enzyme without the need of a chaperone. Is specific for GTP since other nucleotides such as ATP and GMP cannot be utilized. In Escherichia coli (strain K12), this protein is Molybdenum cofactor guanylyltransferase (mobA).